A 399-amino-acid chain; its full sequence is Acetate kinase (399 aa).

N10 contributes to the Mg(2+) binding site. K17 contacts ATP. Position 91 (R91) interacts with substrate. D148 acts as the Proton donor/acceptor in catalysis. ATP-binding positions include 208–212 (HLGNG), 283–285 (DCR), and 331–335 (GIGEN). E385 contacts Mg(2+).

It belongs to the acetokinase family. In terms of assembly, homodimer. Mg(2+) is required as a cofactor. Mn(2+) serves as cofactor.

Its subcellular location is the cytoplasm. It catalyses the reaction acetate + ATP = acetyl phosphate + ADP. Its pathway is metabolic intermediate biosynthesis; acetyl-CoA biosynthesis; acetyl-CoA from acetate: step 1/2. In terms of biological role, catalyzes the formation of acetyl phosphate from acetate and ATP. Can also catalyze the reverse reaction. This chain is Acetate kinase, found in Shewanella amazonensis (strain ATCC BAA-1098 / SB2B).